A 321-amino-acid chain; its full sequence is Coproporphyrin III ferrochelatase (321 aa).

Fe(2+)-binding residues include His-185 and Glu-267.

The protein belongs to the ferrochelatase family.

It localises to the cytoplasm. It carries out the reaction Fe-coproporphyrin III + 2 H(+) = coproporphyrin III + Fe(2+). Its pathway is porphyrin-containing compound metabolism; protoheme biosynthesis. In terms of biological role, involved in coproporphyrin-dependent heme b biosynthesis. Catalyzes the insertion of ferrous iron into coproporphyrin III to form Fe-coproporphyrin III. In Lacticaseibacillus casei (strain BL23) (Lactobacillus casei), this protein is Coproporphyrin III ferrochelatase.